The sequence spans 538 residues: Sensor protein CitS (538 aa).

The Cytoplasmic portion of the chain corresponds to 1–13 (MKRRLFPLTFSAK). Residues 14–34 (MMGFIALLIIAMFVLLGVFLN) traverse the membrane as a helical segment. Residues 35-174 (EQYARTLEEQ…DIQQVIGERL (140 aa)) are Extracellular-facing. Residues 175–195 (IAMWQIVVVIMILGLMGTWLV) form a helical membrane-spanning segment. Residues 196–538 (ANTVKKATLG…TIPKHEAKEG (343 aa)) lie on the Cytoplasmic side of the membrane. The PAS domain maps to 216 to 282 (QQKEAILQSI…PEVLQVGKGQ (67 aa)). One can recognise a Histidine kinase domain in the interval 339-534 (AQTHEFSNKL…CFVLTIPKHE (196 aa)). Position 342 is a phosphohistidine; by autocatalysis (His-342).

Its subcellular location is the cell membrane. The enzyme catalyses ATP + protein L-histidine = ADP + protein N-phospho-L-histidine.. In terms of biological role, member of the two-component regulatory system CitT/CitS. Functions probably as a membrane-associated protein kinase that phosphorylates CitT in response to environmental citrate or Mg(2+)-citrate complex. This chain is Sensor protein CitS (citS), found in Halalkalibacterium halodurans (strain ATCC BAA-125 / DSM 18197 / FERM 7344 / JCM 9153 / C-125) (Bacillus halodurans).